The sequence spans 576 residues: Arginine--tRNA ligase (576 aa).

Residues P122 to H132 carry the 'HIGH' region motif.

It belongs to the class-I aminoacyl-tRNA synthetase family. In terms of assembly, monomer.

Its subcellular location is the cytoplasm. It catalyses the reaction tRNA(Arg) + L-arginine + ATP = L-arginyl-tRNA(Arg) + AMP + diphosphate. The chain is Arginine--tRNA ligase from Yersinia enterocolitica serotype O:8 / biotype 1B (strain NCTC 13174 / 8081).